A 273-amino-acid polypeptide reads, in one-letter code: MHYWGKLLGLIFGVVSGAGFWGIVIGLFIGHMLDRASVRGNQGFFANNQSRQLLFFSSTFQVMGHITKSKGRVTETDIRLASQLMERMQLHGQARIAAQQAFREGKEPNFPLRETLRQLRRACFGRSDLIRMFLEIQLQAAFSDGQLHPNERTVLFIIADELGISRNQFEQFLAMMEGGRNFGDGGEWQQRQYGGYQKAAQGPTLADACKVLGVREKDDATTIKRAYRRLMSEHHPDKLVAKGLPPEMMEIAKQKAQSIQAAYDLIKKEKGFK.

The Periplasmic segment spans residues 1–6 (MHYWGK). The helical transmembrane segment at 7-31 (LLGLIFGVVSGAGFWGIVIGLFIGH) threads the bilayer. Over 32–273 (MLDRASVRGN…DLIKKEKGFK (242 aa)) the chain is Cytoplasmic. The region spanning 207–273 (DACKVLGVRE…DLIKKEKGFK (67 aa)) is the J domain.

In terms of assembly, homodimer.

It localises to the cell inner membrane. Regulatory DnaK co-chaperone. Direct interaction between DnaK and DjlA is needed for the induction of the wcaABCDE operon, involved in the synthesis of a colanic acid polysaccharide capsule, possibly through activation of the RcsB/RcsC phosphotransfer signaling pathway. The colanic acid capsule may help the bacterium survive conditions outside the host. This is Co-chaperone protein DjlA from Photorhabdus laumondii subsp. laumondii (strain DSM 15139 / CIP 105565 / TT01) (Photorhabdus luminescens subsp. laumondii).